The chain runs to 683 residues: UvrABC system protein B (683 aa).

Residues 31-414 (AGFEKGYKEQ…ELERTDHKVE (384 aa)) form the Helicase ATP-binding domain. Residue 44-51 (GATGTGKT) coordinates ATP. The Beta-hairpin signature appears at 97-120 (YYDYYQPEAYVPQSDTYIEKDSAI). A Helicase C-terminal domain is found at 435–601 (QIDDLVGEIN…TIIKPVHDVI (167 aa)). Positions 632–667 (KTMIKNLQEQMKEAAKKLDFEEAANLRDAIMELQSS) constitute a UVR domain. The interval 662-683 (MELQSSSRRPKTRKGKALNGKR) is disordered. A compositionally biased stretch (basic residues) spans 669–683 (RRPKTRKGKALNGKR).

It belongs to the UvrB family. Forms a heterotetramer with UvrA during the search for lesions. Interacts with UvrC in an incision complex.

Its subcellular location is the cytoplasm. Its function is as follows. The UvrABC repair system catalyzes the recognition and processing of DNA lesions. A damage recognition complex composed of 2 UvrA and 2 UvrB subunits scans DNA for abnormalities. Upon binding of the UvrA(2)B(2) complex to a putative damaged site, the DNA wraps around one UvrB monomer. DNA wrap is dependent on ATP binding by UvrB and probably causes local melting of the DNA helix, facilitating insertion of UvrB beta-hairpin between the DNA strands. Then UvrB probes one DNA strand for the presence of a lesion. If a lesion is found the UvrA subunits dissociate and the UvrB-DNA preincision complex is formed. This complex is subsequently bound by UvrC and the second UvrB is released. If no lesion is found, the DNA wraps around the other UvrB subunit that will check the other stand for damage. The protein is UvrABC system protein B of Lactobacillus acidophilus (strain ATCC 700396 / NCK56 / N2 / NCFM).